The primary structure comprises 138 residues: Nucleoside diphosphate kinase (138 aa).

6 residues coordinate ATP: K9, F57, R85, T91, R102, and N112. H115 serves as the catalytic Pros-phosphohistidine intermediate.

It belongs to the NDK family. As to quaternary structure, homotetramer. Requires Mg(2+) as cofactor.

Its subcellular location is the cytoplasm. It carries out the reaction a 2'-deoxyribonucleoside 5'-diphosphate + ATP = a 2'-deoxyribonucleoside 5'-triphosphate + ADP. The enzyme catalyses a ribonucleoside 5'-diphosphate + ATP = a ribonucleoside 5'-triphosphate + ADP. Its function is as follows. Major role in the synthesis of nucleoside triphosphates other than ATP. The ATP gamma phosphate is transferred to the NDP beta phosphate via a ping-pong mechanism, using a phosphorylated active-site intermediate. This chain is Nucleoside diphosphate kinase, found in Desulfatibacillum aliphaticivorans.